The primary structure comprises 423 residues: UPF0597 protein Emin_0811 (423 aa).

It belongs to the UPF0597 family.

This chain is UPF0597 protein Emin_0811, found in Elusimicrobium minutum (strain Pei191).